The sequence spans 215 residues: 3-demethoxyubiquinol 3-hydroxylase (215 aa).

Fe cation is bound by residues E64, E94, H97, E146, E178, and H181.

It belongs to the COQ7 family. Fe cation is required as a cofactor.

The protein resides in the cell membrane. The enzyme catalyses a 5-methoxy-2-methyl-3-(all-trans-polyprenyl)benzene-1,4-diol + AH2 + O2 = a 3-demethylubiquinol + A + H2O. Its pathway is cofactor biosynthesis; ubiquinone biosynthesis. Its function is as follows. Catalyzes the hydroxylation of 2-nonaprenyl-3-methyl-6-methoxy-1,4-benzoquinol during ubiquinone biosynthesis. This Pseudomonas paraeruginosa (strain DSM 24068 / PA7) (Pseudomonas aeruginosa (strain PA7)) protein is 3-demethoxyubiquinol 3-hydroxylase.